We begin with the raw amino-acid sequence, 167 residues long: Probable membrane-bound hydrogenase subunit mbhJ (167 aa).

Residues cysteine 35, cysteine 38, cysteine 102, and cysteine 132 each contribute to the [4Fe-4S] cluster site.

This sequence belongs to the complex I 20 kDa subunit family. The membrane-bound hydrogenase complex is composed of MbhK and MbhL, but may also contain MbhJ. It depends on [4Fe-4S] cluster as a cofactor.

The protein resides in the cell membrane. The catalysed reaction is H2 + 2 oxidized [2Fe-2S]-[ferredoxin] = 2 reduced [2Fe-2S]-[ferredoxin] + 2 H(+). Inhibited by 0.1 mM Cu(2+). Functionally, probable subunit of a hydrogen-evolving hydrogenase that utilizes protons both as a substrate for hydrogen production and proton translocation. Acts by coupling the redox reaction via ferredoxin and iron-sulfur (Fe-S) clusters to proton translocation across the membrane, thereby conserving the redox energy in a proton gradient. The sequence is that of Probable membrane-bound hydrogenase subunit mbhJ from Pyrococcus furiosus (strain ATCC 43587 / DSM 3638 / JCM 8422 / Vc1).